The primary structure comprises 1984 residues: Spermatogenesis-associated protein 31H1 (1984 aa).

Disordered regions lie at residues 448–467, 1045–1067, 1181–1287, 1326–1346, and 1439–1984; these read MGLT…TPGP, PMEE…QHSL, YRER…SDSK, RIGA…KPSQ, and QQPR…EATR. Composition is skewed to polar residues over residues 450–463, 1058–1067, and 1205–1226; these read LTKS…SPGT, TRISESQHSL, and TQAS…QSPA. The segment covering 1238–1247 has biased composition (basic and acidic residues); sequence SRPDLVEKTK. 2 stretches are compositionally biased toward polar residues: residues 1458-1471 and 1492-1508; these read TDSQ…TASV and RNET…TPGT. 2 stretches are compositionally biased toward basic and acidic residues: residues 1532 to 1558 and 1568 to 1579; these read DKLT…ERTR and SPSERSQRSSLE. A run of 3 repeats spans residues 1593-1600, 1601-1608, and 1609-1616. A 27 X 8 AA approximate tandem repeat of P-S-E-R-S-H-H-S region spans residues 1593–1935; that stretch reads PSRKNHSSPS…CSPSERSRRS (343 aa). Positions 1599–1610 are enriched in low complexity; it reads SSPSERSWRSPS. The segment covering 1620 to 1630 has biased composition (basic and acidic residues); sequence RSCHSLSERGL. The segment covering 1636–1647 has biased composition (basic residues); it reads RSHRGPSQRRHH. A run of 3 repeats spans residues 1641–1648, 1649–1656, and 1657–1664. Over residues 1648–1667 the composition is skewed to basic and acidic residues; the sequence is SPSERSHRSPSERSHRSSSE. A compositionally biased stretch (basic residues) spans 1668–1679; the sequence is RRHRSPSQRSHR. Basic and acidic residues predominate over residues 1680 to 1691; the sequence is GPSERSHCSPSE. 19 tandem repeats follow at residues 1681 to 1688, 1689 to 1696, 1697 to 1704, 1705 to 1712, 1713 to 1720, 1721 to 1728, 1729 to 1736, 1737 to 1744, 1745 to 1752, 1753 to 1760, 1761 to 1768, 1769 to 1776, 1777 to 1784, 1785 to 1792, 1793 to 1800, 1801 to 1808, 1848 to 1855, 1864 to 1871, and 1880 to 1887. Over residues 1692–1727 the composition is skewed to basic residues; it reads RRHRSPSQRSHRGPSERRHHSPSKRSHRSPARRSHR. Residues 1728–1869 show a composition bias toward basic and acidic residues; the sequence is SPSERSHHSP…SRCSPSERRG (142 aa). Composition is skewed to basic and acidic residues over residues 1895–1917, 1928–1941, and 1949–1959; these read RTSE…EMRP, PSER…KEGL, and RPSHSLSRDFK. Repeat copies occupy residues 1921–1928 and 1929–1935. Over residues 1960 to 1969 the composition is skewed to polar residues; sequence NQTTLLGTTH.

Expressed in sperm (at protein level).

In Homo sapiens (Human), this protein is Spermatogenesis-associated protein 31H1.